Here is a 927-residue protein sequence, read N- to C-terminus: Cell division control protein 15 (927 aa).

An F-BAR domain is found at 20-273 (VKFRDNFWGS…TLENTNIDED (254 aa)). Positions 108 to 207 (QQINTELRNK…AEYRETNELL (100 aa)) form a coiled coil. The segment covering 321–354 (SRPSASASLASSPTRSAFRPKTSETVSSEVVSSP) has biased composition (low complexity). Disordered regions lie at residues 321–370 (SRPS…SNEQ), 390–409 (ESQK…VTSP), 423–495 (VRSS…TSLG), 509–550 (PTSP…DELE), and 597–857 (SSSM…VDPR). S331 and S332 each carry phosphoserine. Polar residues predominate over residues 397–409 (TGSSMRRPSVTSP). Residues 444-461 (PEVKEGKNSENAITKDND) show a composition bias toward basic and acidic residues. 3 stretches are compositionally biased toward polar residues: residues 465 to 482 (LSSQ…SRLS), 513 to 546 (FMGS…SVQS), and 616 to 625 (LSKTSSSTRL). The residue at position 529 (T529) is a Phosphothreonine. 2 positions are modified to phosphoserine: S636 and S639. Residues 658–675 (TSAQMQRMSNSFASQTKQ) show a composition bias toward polar residues. Positions 680–691 (QRTENSARESLR) are enriched in basic and acidic residues. Positions 695 to 714 (SNMSRSPSPMLSRRSSTLRP) are enriched in low complexity. The residue at position 700 (S700) is a Phosphoserine. Composition is skewed to polar residues over residues 718-730 (RSAS…QSDV) and 739-775 (ARGQ…SVSP). The residue at position 774 (S774) is a Phosphoserine. Positions 784-813 (SSSVLQSQKSTSSNTSNRNNGGYSGSRPSS) are enriched in low complexity. The segment covering 823–853 (SGRSMRQVSQRSTSRARSPEPTNRNSVQSKN) has biased composition (polar residues). The region spanning 866–927 (PILGYVIALY…LFPSNFVQTV (62 aa)) is the SH3 domain.

The protein localises to the cytoplasm. It is found in the cytoskeleton. After the onset of mitosis, forms a ring-like structure which colocalizes with the medial actin ring. Appears to mediate cytoskeletal rearrangements required for cytokinesis. Essential for viability. The chain is Cell division control protein 15 (cdc15) from Schizosaccharomyces pombe (strain 972 / ATCC 24843) (Fission yeast).